Consider the following 143-residue polypeptide: Transcriptional regulator MraZ (143 aa).

SpoVT-AbrB domains lie at 5–47 (EYEH…PMPV) and 76–119 (ASDL…SAER).

The protein belongs to the MraZ family. As to quaternary structure, forms oligomers.

Its subcellular location is the cytoplasm. The protein resides in the nucleoid. The protein is Transcriptional regulator MraZ of Herpetosiphon aurantiacus (strain ATCC 23779 / DSM 785 / 114-95).